Reading from the N-terminus, the 191-residue chain is ADP-ribosylation factor (191 aa).

Gly-2 is lipidated: N-myristoyl glycine. GTP is bound by residues 24 to 31 (GLDAAGKT), 67 to 71 (DVGGQ), and 128 to 131 (NKQD).

This sequence belongs to the small GTPase superfamily. Arf family.

It localises to the golgi apparatus. Functionally, GTP-binding protein involved in protein trafficking; may modulate vesicle budding and uncoating within the Golgi apparatus. The chain is ADP-ribosylation factor from Giardia intestinalis (Giardia lamblia).